A 349-amino-acid polypeptide reads, in one-letter code: Phosphoribosylformylglycinamidine cyclo-ligase (349 aa).

Belongs to the AIR synthase family.

The protein resides in the cytoplasm. It catalyses the reaction 2-formamido-N(1)-(5-O-phospho-beta-D-ribosyl)acetamidine + ATP = 5-amino-1-(5-phospho-beta-D-ribosyl)imidazole + ADP + phosphate + H(+). The protein operates within purine metabolism; IMP biosynthesis via de novo pathway; 5-amino-1-(5-phospho-D-ribosyl)imidazole from N(2)-formyl-N(1)-(5-phospho-D-ribosyl)glycinamide: step 2/2. The protein is Phosphoribosylformylglycinamidine cyclo-ligase of Albidiferax ferrireducens (strain ATCC BAA-621 / DSM 15236 / T118) (Rhodoferax ferrireducens).